Here is a 118-residue protein sequence, read N- to C-terminus: Large ribosomal subunit protein bL20 (118 aa).

This sequence belongs to the bacterial ribosomal protein bL20 family.

Functionally, binds directly to 23S ribosomal RNA and is necessary for the in vitro assembly process of the 50S ribosomal subunit. It is not involved in the protein synthesizing functions of that subunit. The sequence is that of Large ribosomal subunit protein bL20 from Nostoc punctiforme (strain ATCC 29133 / PCC 73102).